We begin with the raw amino-acid sequence, 93 residues long: Acylphosphatase (93 aa).

Positions 7–93 (RLTAWVHGRV…ADAIAGFTER (87 aa)) constitute an Acylphosphatase-like domain. Catalysis depends on residues arginine 22 and asparagine 40.

It belongs to the acylphosphatase family.

The catalysed reaction is an acyl phosphate + H2O = a carboxylate + phosphate + H(+). This chain is Acylphosphatase (acyP), found in Mycolicibacterium vanbaalenii (strain DSM 7251 / JCM 13017 / BCRC 16820 / KCTC 9966 / NRRL B-24157 / PYR-1) (Mycobacterium vanbaalenii).